Reading from the N-terminus, the 477-residue chain is Bifunctional protein HldE (477 aa).

Positions methionine 1 to threonine 318 are ribokinase. Lysine 179 bears the N6-acetyllysine mark. An ATP-binding site is contributed by asparagine 195 to glutamate 198. The active site involves aspartate 264. Residues methionine 344 to glycine 477 are cytidylyltransferase.

This sequence in the N-terminal section; belongs to the carbohydrate kinase PfkB family. It in the C-terminal section; belongs to the cytidylyltransferase family. In terms of assembly, homodimer.

It carries out the reaction D-glycero-beta-D-manno-heptose 7-phosphate + ATP = D-glycero-beta-D-manno-heptose 1,7-bisphosphate + ADP + H(+). The catalysed reaction is D-glycero-beta-D-manno-heptose 1-phosphate + ATP + H(+) = ADP-D-glycero-beta-D-manno-heptose + diphosphate. The protein operates within nucleotide-sugar biosynthesis; ADP-L-glycero-beta-D-manno-heptose biosynthesis; ADP-L-glycero-beta-D-manno-heptose from D-glycero-beta-D-manno-heptose 7-phosphate: step 1/4. It participates in nucleotide-sugar biosynthesis; ADP-L-glycero-beta-D-manno-heptose biosynthesis; ADP-L-glycero-beta-D-manno-heptose from D-glycero-beta-D-manno-heptose 7-phosphate: step 3/4. Functionally, catalyzes the phosphorylation of D-glycero-D-manno-heptose 7-phosphate at the C-1 position to selectively form D-glycero-beta-D-manno-heptose-1,7-bisphosphate. Its function is as follows. Catalyzes the ADP transfer from ATP to D-glycero-beta-D-manno-heptose 1-phosphate, yielding ADP-D-glycero-beta-D-manno-heptose. The polypeptide is Bifunctional protein HldE (Escherichia coli O17:K52:H18 (strain UMN026 / ExPEC)).